The primary structure comprises 220 residues: Translin-1 (220 aa).

The protein belongs to the translin family. As to quaternary structure, forms an octameric ring-shaped structure, which is capable of binding DNA or RNA.

The protein resides in the cytoplasm. It is found in the nucleus. DNA-binding protein that specifically recognizes consensus sequences at the breakpoint junctions in chromosomal translocations. Selectively binds single-stranded d(GT)n and d(GTT)n microsatellite repeats. Has much higher affinities for the homologous RNA sequences (GU)n and (GUU)n. Does not bind double-stranded DNA. Has a role in meiosis. The chain is Translin-1 (tsn1) from Schizosaccharomyces pombe (strain 972 / ATCC 24843) (Fission yeast).